Consider the following 588-residue polypeptide: Transcription factor 7-like 1 (588 aa).

Gly residues predominate over residues 1 to 31 (MPQLGGGGGGGGGGSGGGGGSSAGAAGGGDD). The segment at 1-74 (MPQLGGGGGG…VKSSLVNESE (74 aa)) is CTNNB1-binding. Disordered regions lie at residues 1–101 (MPQL…PRDY), 203–234 (SPGS…SPYY), and 409–506 (LYPT…LSLT). Low complexity predominate over residues 67–81 (SSLVNESENQSSSSD). Basic and acidic residues predominate over residues 83–101 (EAERRPQPVRDTFQKPRDY). The segment at residues 346 to 414 (VKKPLNAFML…LHSQLYPTWS (69 aa)) is a DNA-binding region (HMG box). Residues 421–427 (KKKKRKR) carry the Nuclear localization signal motif. 2 stretches are compositionally biased toward low complexity: residues 431–441 (LSQTQSQQQVQ) and 478–497 (SPAT…ATHS).

The protein belongs to the TCF/LEF family. In terms of assembly, binds the armadillo repeat of CTNNB1 and forms a stable complex. Interacts with DAZAP2. As to expression, detected in hair follicles and skin keratinocytes, and at lower levels in stomach epithelium.

Its subcellular location is the nucleus. Its function is as follows. Participates in the Wnt signaling pathway. Binds to DNA and acts as a repressor in the absence of CTNNB1, and as an activator in its presence. Necessary for the terminal differentiation of epidermal cells, the formation of keratohyalin granules and the development of the barrier function of the epidermis. Down-regulates NQO1, leading to increased mitomycin c resistance. The protein is Transcription factor 7-like 1 (TCF7L1) of Homo sapiens (Human).